Reading from the N-terminus, the 262-residue chain is Putative hydro-lyase BLi00500/BL02808 (262 aa).

It belongs to the D-glutamate cyclase family.

This Bacillus licheniformis (strain ATCC 14580 / DSM 13 / JCM 2505 / CCUG 7422 / NBRC 12200 / NCIMB 9375 / NCTC 10341 / NRRL NRS-1264 / Gibson 46) protein is Putative hydro-lyase BLi00500/BL02808.